Here is a 595-residue protein sequence, read N- to C-terminus: Indole-3-acetic acid-amido synthetase GH3.3 (595 aa).

Belongs to the IAA-amido conjugating enzyme family.

In terms of biological role, catalyzes the synthesis of indole-3-acetic acid (IAA)-amino acid conjugates, providing a mechanism for the plant to cope with the presence of excess auxin. Strongly reactive with Glu, Gln, Trp, Asp, Ala, Leu, Phe, Gly, Tyr, Met, Ile and Val. Little or no product formation with His, Ser, Thr, Arg, Lys, or Cys. Also active on pyruvic and butyric acid analogs of IAA, PAA and the synthetic auxin naphthaleneacetic acid (NAA). The two chlorinated synthetic auxin herbicides 2,4-D and 3,6-dichloro-o-anisic acid (dicamba) cannot be used as substrates. The sequence is that of Indole-3-acetic acid-amido synthetase GH3.3 (GH3.3) from Arabidopsis thaliana (Mouse-ear cress).